The chain runs to 646 residues: ATP-dependent rRNA helicase SPB4 (646 aa).

A Q motif motif is present at residues 15–43 (WGALTPSLAPWILDYLSSMGFEQPTPVQK). The Helicase ATP-binding domain occupies 46-247 (FDIFRGNKDV…TVGLLYPHKI (202 aa)). 59–66 (AVTGSGKT) serves as a coordination point for ATP. Residues 195–198 (DEAD) carry the DEAD box motif. The Helicase C-terminal domain maps to 284–434 (ALCQLLERLE…PLAKPPVSVT (151 aa)). 2 stretches are compositionally biased toward basic and acidic residues: residues 539-548 (KKEKAAREAQ) and 566-581 (NEAW…VKAA). The segment at 539–646 (KKEKAAREAQ…GGDEFEGFDD (108 aa)) is disordered. Residues 572-623 (KHEHEDVKAARREKKRRKREAQRLGDMTEPEREEQRKLDEMIAEVRRRNAEA) are a coiled coil. Positions 582–591 (RREKKRRKRE) are enriched in basic residues. Basic and acidic residues predominate over residues 600–621 (EPEREEQRKLDEMIAEVRRRNA). Over residues 622–631 (EAPTPAAQAA) the composition is skewed to low complexity.

The protein belongs to the DEAD box helicase family. DDX55/SPB4 subfamily. Component of pre-60S ribosomal complexes.

The protein localises to the nucleus. It localises to the nucleolus. It carries out the reaction ATP + H2O = ADP + phosphate + H(+). Its function is as follows. ATP-binding RNA helicase involved in the biogenesis of 60S ribosomal subunits. Binds 90S pre-ribosomal particles and dissociates from pre-60S ribosomal particles after processing of 27SB pre-rRNA. Required for the normal formation of 18S rRNA through the processing of pre-rRNAs at sites A0, A1 and A2, and the normal formation of 25S and 5.8S rRNAs through the processing of pre-rRNAs at sites C1 and C2. In Chaetomium globosum (strain ATCC 6205 / CBS 148.51 / DSM 1962 / NBRC 6347 / NRRL 1970) (Soil fungus), this protein is ATP-dependent rRNA helicase SPB4.